We begin with the raw amino-acid sequence, 224 residues long: Germin-like protein 1-2 (224 aa).

The signal sequence occupies residues 1-29 (MASSRSVVLRVLVAVAVVAAAGAPRLAVA). Cysteines 38 and 53 form a disulfide. One can recognise a Cupin type-1 domain in the interval 67 to 215 (DAIVQAPSTS…TFLMGEDEVG (149 aa)). Asn-82 carries N-linked (GlcNAc...) asparagine glycosylation. Residues His-115, His-117, Glu-122, and His-161 each contribute to the Mn(2+) site. N-linked (GlcNAc...) asparagine glycosylation is present at Asn-170.

The protein belongs to the germin family. Oligomer (believed to be a pentamer but probably hexamer).

The protein localises to the secreted. It localises to the extracellular space. It is found in the apoplast. Its function is as follows. May play a role in plant defense. Probably has no oxalate oxidase activity even if the active site is conserved. In Oryza sativa subsp. japonica (Rice), this protein is Germin-like protein 1-2.